A 330-amino-acid chain; its full sequence is Autoinducer 2 import system permease protein LsrD (330 aa).

Topologically, residues methionine 1–arginine 4 are cytoplasmic. Residues tyrosine 5 to isoleucine 25 traverse the membrane as a helical segment. Over asparagine 26–phenylalanine 42 the chain is Periplasmic. The helical transmembrane segment at isoleucine 43–isoleucine 63 threads the bilayer. Residues serine 64–serine 67 are Cytoplasmic-facing. The next 2 membrane-spanning stretches (helical) occupy residues threonine 68–leucine 88 and alanine 89–isoleucine 109. Residues tyrosine 110–proline 115 lie on the Cytoplasmic side of the membrane. The helical transmembrane segment at leucine 116–methionine 136 threads the bilayer. Over alanine 137 to aspartate 159 the chain is Periplasmic. Residues valine 160–tryptophan 180 traverse the membrane as a helical segment. Over leucine 181 to arginine 209 the chain is Cytoplasmic. The helical transmembrane segment at threonine 210 to valine 230 threads the bilayer. The Periplasmic portion of the chain corresponds to serine 231–arginine 237. 2 consecutive transmembrane segments (helical) span residues serine 238–asparagine 258 and isoleucine 259–leucine 279. Residues glutamine 280–methionine 285 are Periplasmic-facing. A helical membrane pass occupies residues alanine 286–valine 306. Topologically, residues glycine 307–proline 330 are cytoplasmic.

It belongs to the binding-protein-dependent transport system permease family. AraH/RbsC subfamily. In terms of assembly, the complex is composed of two ATP-binding proteins (LsrA), two transmembrane proteins (LsrC and LsrD) and a solute-binding protein (LsrB).

Its subcellular location is the cell inner membrane. In terms of biological role, part of the ABC transporter complex LsrABCD involved in autoinducer 2 (AI-2) import. Probably responsible for the translocation of the substrate across the membrane. This chain is Autoinducer 2 import system permease protein LsrD (lsrD), found in Escherichia coli O157:H7.